The following is a 270-amino-acid chain: tRNA pseudouridine synthase A (270 aa).

The active-site Nucleophile is Asp-51. Tyr-109 provides a ligand contact to substrate.

The protein belongs to the tRNA pseudouridine synthase TruA family. In terms of assembly, homodimer.

It carries out the reaction uridine(38/39/40) in tRNA = pseudouridine(38/39/40) in tRNA. Formation of pseudouridine at positions 38, 39 and 40 in the anticodon stem and loop of transfer RNAs. The protein is tRNA pseudouridine synthase A of Burkholderia lata (strain ATCC 17760 / DSM 23089 / LMG 22485 / NCIMB 9086 / R18194 / 383).